A 982-amino-acid polypeptide reads, in one-letter code: Hunchback-like protein (982 aa).

Residues 87-194 are disordered; it reads QPGEKIHPDG…SNYQVTSEPV (108 aa). Positions 101–110 are enriched in basic and acidic residues; that stretch reads PKEDGRKSSE. Positions 111–132 are enriched in polar residues; it reads HTNSYDVSASQSPSNDGAQSDS. Positions 142 to 152 are enriched in acidic residues; that stretch reads CMTETEMDTDE. Positions 153–175 are enriched in basic and acidic residues; sequence KDSTIKPEDQATPKLEEGSDSKP. Polar residues predominate over residues 176-193; the sequence is ESTSVEGTSSNYQVTSEP. 7 C2H2-type zinc fingers span residues 336 to 358, 361 to 384, 538 to 560, 567 to 589, 595 to 617, 623 to 647, and 734 to 756; these read LVCP…MNTH, HQCS…RESH, FKCK…ARTH, LNCQ…YRNH, FQCK…MKSH, FRCM…KYNH, and LKCS…SMSH. Positions 377 to 415 are disordered; the sequence is KKHMRESHTVEEQLRAGFESEPAKESASSPKNLSLSKDG. Residues 811 to 896 form a disordered region; sequence EEMDQGSDSA…PPLHSSSIVA (86 aa). 2 stretches are compositionally biased toward polar residues: residues 816 to 831 and 843 to 862; these read GSDS…QISS and SLEQ…SNDS. The segment covering 863–875 has biased composition (basic and acidic residues); the sequence is AMEKDGESADDAP. C2H2-type zinc fingers lie at residues 929–951 and 957–981; these read FYCD…MRFH and FMCS…QARH.

The protein belongs to the hunchback C2H2-type zinc-finger protein family. As to expression, expressed primarily in ectodermal cells during embryonic and larval development.

Its subcellular location is the nucleus. Required for the late stages of development. Plays a role in the developmental timing of postembryonic hypodermal seam cell fusion events and adult alae production. The polypeptide is Hunchback-like protein (Caenorhabditis elegans).